Reading from the N-terminus, the 509-residue chain is Tyrosine-protein kinase Lck (509 aa).

A lipid anchor (N-myristoyl glycine) is attached at Gly-2. Positions 2–72 (GCGCSSHPED…DNLVIALHSY (71 aa)) are interactions with CD4 and CD8. 2 S-palmitoyl cysteine lipidation sites follow: Cys-3 and Cys-5. In terms of domain architecture, SH3 spans 61-121 (LQDNLVIALH…PFNFVAKANS (61 aa)). Lys-99 participates in a covalent cross-link: Glycyl lysine isopeptide (Lys-Gly) (interchain with G-Cter in ubiquitin). Residue Ser-102 is modified to Phosphoserine. The SH2 domain maps to 127 to 224 (WFFKNLSRKD…GLCTRLSRPC (98 aa)). The segment at 154–242 (RESESTAGSF…WWEDEWEVPR (89 aa)) is interaction with PTPRH. Thr-159 is subject to Phosphothreonine. Ser-162 carries the post-translational modification Phosphoserine. Tyr-192 carries the post-translational modification Phosphotyrosine. Ser-194 bears the Phosphoserine mark. The Protein kinase domain maps to 245 to 498 (LKLVERLGAG…YLRSVLEDFF (254 aa)). Residues 251–259 (LGAGQFGEV) and Lys-273 contribute to the ATP site. A Glycyl lysine isopeptide (Lys-Gly) (interchain with G-Cter in ubiquitin) cross-link involves residue Lys-276. Catalysis depends on Asp-364, which acts as the Proton acceptor. Tyr-394 bears the Phosphotyrosine; by autocatalysis mark. Residue Tyr-505 is modified to Phosphotyrosine; by CSK.

It belongs to the protein kinase superfamily. Tyr protein kinase family. SRC subfamily. In terms of assembly, binds to the cytoplasmic domain of cell surface receptors, such as AXL, CD2, CD4, CD5, CD8, CD44, CD45 and CD122. Also binds to effector molecules, such as PI4K, VAV1, RASA1, FYB1 and to other protein kinases including CDK1, RAF1, ZAP70 and SYK. Binds to phosphatidylinositol 3'-kinase (PI3K) from T-lymphocytes through its SH3 domain and to the tyrosine phosphorylated form of KHDRBS1/p70 through its SH2 domain. This interaction inhibits its tyrosine-kinase activity. Interacts with SQSTM1. Interacts with phosphorylated LIME1. Interacts with CBLB and PTPRH. Interacts with RUNX3. Forms a signaling complex with EPHA1, PTK2B and PI3-KINASE; upon activation by EFNA1 which may regulate T-lymphocyte migration. Associates with ZAP70 and RHOH; these interactions allow LCK-mediated RHOH and CD3 subunit phosphorylation in the presence of functional ZAP70. Interacts with UNC119; this interaction plays a crucial role in activation of LCK. Interacts with CEACAM1 (via cytoplasmic domain); mediates CEACAM1 phosphorylation resulting in PTPN6 recruitment that dephosphorylates TCR stimulation-induced CD247 and ZAP70. Interacts with CD160. Interacts with CD48. As to quaternary structure, (Microbial infection) Interacts with herpes simplex virus 1 UL46; this interaction activates LCK. (Microbial infection) Interacts with HIV-1 Nef through its SH3 domain. Post-translationally, autophosphorylated on Tyr-394, increasing enzymatic activity, this site is dephosphorylated by PTN22. Phosphorylated on Tyr-505 by CSK, decreasing activity. Dephosphorylated by PTPRC/CD45. Dephosphorylation at Tyr-394 by PTPN2 negatively regulates T-cell receptor signaling. Dephosphorylation at Tyr-394 by DUSP22 negatively regulates T-cell receptor signaling. Myristoylation is required prior to palmitoylation. In terms of processing, palmitoylation regulates association with the plasma membrane and could be mediated by ZDHHC2. Post-translationally, 'Lys-63'-linked ubiquitinated at Lys-99 and Lys-276 by UBR2; this modification is required for autophosphorylation at Tyr-394. In terms of tissue distribution, expressed specifically in lymphoid cells.

It localises to the cell membrane. It is found in the cytoplasm. The protein resides in the cytosol. The catalysed reaction is L-tyrosyl-[protein] + ATP = O-phospho-L-tyrosyl-[protein] + ADP + H(+). Its activity is regulated as follows. The relative activities of the inhibitory tyrosine-protein kinase CSK and the activating tyrosine-protein phosphatase PTPRC/CD45 determine the level of LCK activity. These interactions allow rapid and efficient activation of LCK in response to TCR stimulation. Non-receptor tyrosine-protein kinase that plays an essential role in the selection and maturation of developing T-cells in the thymus and in the function of mature T-cells. Plays a key role in T-cell antigen receptor (TCR)-linked signal transduction pathways. Constitutively associated with the cytoplasmic portions of the CD4 and CD8 surface receptors. Association of the TCR with a peptide antigen-bound MHC complex facilitates the interaction of CD4 and CD8 with MHC class II and class I molecules, respectively, thereby recruiting the associated LCK protein to the vicinity of the TCR/CD3 complex. LCK then phosphorylates tyrosine residues within the immunoreceptor tyrosine-based activation motifs (ITAM) of the cytoplasmic tails of the TCR-gamma chains and CD3 subunits, initiating the TCR/CD3 signaling pathway. Once stimulated, the TCR recruits the tyrosine kinase ZAP70, that becomes phosphorylated and activated by LCK. Following this, a large number of signaling molecules are recruited, ultimately leading to lymphokine production. LCK also contributes to signaling by other receptor molecules. Associates directly with the cytoplasmic tail of CD2, which leads to hyperphosphorylation and activation of LCK. Also plays a role in the IL2 receptor-linked signaling pathway that controls the T-cell proliferative response. Binding of IL2 to its receptor results in increased activity of LCK. Is expressed at all stages of thymocyte development and is required for the regulation of maturation events that are governed by both pre-TCR and mature alpha beta TCR. Phosphorylates other substrates including RUNX3, PTK2B/PYK2, the microtubule-associated protein MAPT, RHOH or TYROBP. Interacts with FYB2. The protein is Tyrosine-protein kinase Lck (LCK) of Homo sapiens (Human).